The chain runs to 261 residues: CD40 ligand (261 aa).

Topologically, residues 1-22 are cytoplasmic; sequence MIETYSQPSPRSVATGPPVSMK. Residues 23-46 form a helical; Signal-anchor for type II membrane protein membrane-spanning segment; sequence IFMYLLTVFLITQMIGSALFAVYL. The Extracellular portion of the chain corresponds to 47 to 261; the sequence is HRRLDKIEDE…GFTSFGLLKL (215 aa). Residues 122 to 261 enclose the THD domain; the sequence is IAAHVISEAS…GFTSFGLLKL (140 aa). The cysteines at positions 178 and 218 are disulfide-linked. Residue asparagine 240 is glycosylated (N-linked (GlcNAc...) asparagine).

It belongs to the tumor necrosis factor family. As to quaternary structure, homotrimer. Interacts with CD28. CD40 ligand, soluble form: Exists as either a monomer or a homotrimer. Forms a ternary complex between CD40 and integrins for CD40-CD40LG signaling. Post-translationally, the soluble form derives from the membrane form by proteolytic processing.

It localises to the cell membrane. Its subcellular location is the cell surface. The protein resides in the secreted. Its function is as follows. Cytokine that acts as a ligand to CD40/TNFRSF5. Costimulates T-cell proliferation and cytokine production. Its cross-linking on T-cells generates a costimulatory signal which enhances the production of IL4 and IL10 in conjunction with the TCR/CD3 ligation and CD28 costimulation. Induces the activation of NF-kappa-B. Induces the activation of kinases MAPK8 and PAK2 in T-cells. Mediates B-cell proliferation in the absence of co-stimulus as well as IgE production in the presence of IL4. Involved in immunoglobulin class switching. Acts as a ligand for integrins, specifically ITGA5:ITGB1 and ITGAV:ITGB3; both integrins and the CD40 receptor are required for activation of CD40-CD40LG signaling, which have cell-type dependent effects, such as B-cell activation, NF-kappa-B signaling and anti-apoptotic signaling. The protein is CD40 ligand (CD40LG) of Bos taurus (Bovine).